The sequence spans 174 residues: Alkyl hydroperoxide reductase AhpD (174 aa).

The active-site Proton donor is C130. C130 and C133 are joined by a disulfide. C133 serves as the catalytic Cysteine sulfenic acid (-SOH) intermediate.

The protein belongs to the AhpD family. Homotrimer.

It carries out the reaction N(6)-[(R)-dihydrolipoyl]-L-lysyl-[lipoyl-carrier protein] + a hydroperoxide = N(6)-[(R)-lipoyl]-L-lysyl-[lipoyl-carrier protein] + an alcohol + H2O. Its function is as follows. Antioxidant protein with alkyl hydroperoxidase activity. Required for the reduction of the AhpC active site cysteine residues and for the regeneration of the AhpC enzyme activity. This chain is Alkyl hydroperoxide reductase AhpD, found in Corynebacterium kroppenstedtii (strain DSM 44385 / JCM 11950 / CIP 105744 / CCUG 35717).